Here is a 337-residue protein sequence, read N- to C-terminus: CMP-N-acetylneuraminate-beta-galactosamide-alpha-2,3-sialyltransferase 1 (337 aa).

The Cytoplasmic segment spans residues 1–4; sequence MRRK. A helical; Signal-anchor for type II membrane protein transmembrane segment spans residues 5–25; the sequence is TLKYLTFFLLFIFLTSFVLNY. Residues 26–337 lie on the Lumenal side of the membrane; sequence SNTGVPSAWF…INKIRIFKGR (312 aa). Disulfide bonds link Cys-56–Cys-61, Cys-58–Cys-136, and Cys-139–Cys-278. Asn-76 carries N-linked (GlcNAc...) asparagine glycosylation. Residue Gln-102 coordinates substrate. A glycan (N-linked (GlcNAc...) asparagine) is linked at Asn-109. Substrate contacts are provided by Asn-144, Asn-167, Tyr-227, Tyr-263, Gly-267, Gly-287, His-296, and His-313. N-linked (GlcNAc...) asparagine glycosylation occurs at Asn-320.

The protein belongs to the glycosyltransferase 29 family. The soluble form derives from the membrane form by proteolytic processing. Highly expressed in submaxillary gland and to a much lesser extent in liver, lung, kidney, heart and brain.

The protein resides in the golgi apparatus. It localises to the golgi stack membrane. The protein localises to the trans-Golgi network membrane. Its subcellular location is the secreted. The catalysed reaction is a beta-D-galactosyl-(1-&gt;3)-N-acetyl-alpha-D-galactosaminyl derivative + CMP-N-acetyl-beta-neuraminate = an N-acetyl-alpha-neuraminyl-(2-&gt;3)-beta-D-galactosyl-(1-&gt;3)-N-acetyl-alpha-D-galactosaminyl derivative + CMP + H(+). It catalyses the reaction a ganglioside GM1 (d18:1(4E)) + CMP-N-acetyl-beta-neuraminate = a ganglioside GD1a (d18:1(4E)) + CMP + H(+). The enzyme catalyses ganglioside GM1 (d18:1(4E)/18:0) + CMP-N-acetyl-beta-neuraminate = ganglioside GD1a (18:1(4E)/18:0) + CMP + H(+). It carries out the reaction a ganglioside GA1 + CMP-N-acetyl-beta-neuraminate = a ganglioside GM1b + CMP + H(+). The catalysed reaction is a ganglioside GA1 (d18:1(4E)) + CMP-N-acetyl-beta-neuraminate = a ganglioside GM1b (d18:1(4E)) + CMP + H(+). It catalyses the reaction a ganglioside GD1b + CMP-N-acetyl-beta-neuraminate = a ganglioside GT1b + CMP + H(+). The enzyme catalyses a 3-O-[beta-D-galactosyl-(1-&gt;3)-N-acetyl-alpha-D-galactosaminyl]-L-threonyl-[protein] + CMP-N-acetyl-beta-neuraminate = a 3-O-[N-acetyl-alpha-neuraminyl-(2-&gt;3)-beta-D-galactosyl-(1-&gt;3)-N-acetyl-alpha-D-galactosaminyl]-L-threonyl-[protein] + CMP + H(+). It carries out the reaction a 3-O-[beta-D-galactosyl-(1-&gt;3)-N-acetyl-alpha-D-galactosaminyl]-L-seryl-[protein] + CMP-N-acetyl-beta-neuraminate = 3-O-[N-acetyl-alpha-neuraminyl-(2-&gt;3)-beta-D-galactosyl-(1-&gt;3)-N-acetyl-alpha-D-galactosaminyl]-L-seryl-[protein] + CMP + H(+). The protein operates within protein modification; protein glycosylation. It participates in glycolipid biosynthesis. Functionally, a beta-galactoside alpha2-&gt;3 sialyltransferase involved in terminal sialylation of glycoproteins and glycolipids. Catalyzes the transfer of sialic acid (N-acetyl-neuraminic acid; Neu5Ac) from the nucleotide sugar donor CMP-Neu5Ac onto acceptor Galbeta-(1-&gt;3)-GalNAc-terminated glycoconjugates through an alpha2-3 linkage. Adds sialic acid to the core 1 O-glycan, Galbeta-(1-&gt;3)-GalNAc-O-Ser/Thr, which is a major structure of mucin-type O-glycans. As part of a homeostatic mechanism that regulates CD8-positive T cell numbers, sialylates core 1 O-glycans of T cell glycoproteins, SPN/CD43 and PTPRC/CD45. Prevents premature apoptosis of thymic CD8-positive T cells prior to peripheral emigration, whereas in the secondary lymphoid organs controls the survival of CD8-positive memory T cells generated following a successful immune response. Transfers sialic acid to asialofetuin, presumably onto Galbeta-(1-&gt;3)-GalNAc-O-Ser. Sialylates GM1a, GA1 and GD1b gangliosides to form GD1a, GM1b and GT1b, respectively. The chain is CMP-N-acetylneuraminate-beta-galactosamide-alpha-2,3-sialyltransferase 1 (St3gal1) from Mus musculus (Mouse).